A 340-amino-acid polypeptide reads, in one-letter code: Ferrochelatase (340 aa).

2 residues coordinate Fe cation: H189 and E292.

This sequence belongs to the ferrochelatase family.

It localises to the cytoplasm. The enzyme catalyses heme b + 2 H(+) = protoporphyrin IX + Fe(2+). It functions in the pathway porphyrin-containing compound metabolism; protoheme biosynthesis; protoheme from protoporphyrin-IX: step 1/1. Its function is as follows. Catalyzes the ferrous insertion into protoporphyrin IX. This is Ferrochelatase from Pseudomonas savastanoi pv. phaseolicola (strain 1448A / Race 6) (Pseudomonas syringae pv. phaseolicola (strain 1448A / Race 6)).